Here is a 259-residue protein sequence, read N- to C-terminus: Keratin-associated protein 10-8 (259 aa).

Positions 26–243 are 19 X 5 AA repeats of C-C-X(3); the sequence is HVSRVSSPST…SCQPSCCHPA (218 aa). A run of 19 repeats spans residues 50 to 54, 60 to 64, 65 to 69, 98 to 102, 108 to 112, 118 to 122, 123 to 127, 133 to 137, 145 to 149, 155 to 159, 165 to 169, 170 to 174, 175 to 179, 187 to 191, 197 to 201, 202 to 206, 221 to 225, 228 to 232, and 239 to 243.

This sequence belongs to the KRTAP type 10 family. In terms of assembly, interacts with hair keratins. As to expression, restricted to a narrow region of the hair fiber cuticle, lying approximately 20 cell layers above the apex of the dermal papilla of the hair root; not detected in any other tissues.

Its function is as follows. In the hair cortex, hair keratin intermediate filaments are embedded in an interfilamentous matrix, consisting of hair keratin-associated proteins (KRTAP), which are essential for the formation of a rigid and resistant hair shaft through their extensive disulfide bond cross-linking with abundant cysteine residues of hair keratins. The matrix proteins include the high-sulfur and high-glycine-tyrosine keratins. This is Keratin-associated protein 10-8 (KRTAP10-8) from Homo sapiens (Human).